Here is a 185-residue protein sequence, read N- to C-terminus: UPF0397 protein LJ_1703 (185 aa).

5 helical membrane-spanning segments follow: residues 6 to 26, 46 to 66, 78 to 98, 113 to 133, and 147 to 167; these read GLSV…VILA, FLAL…GFIG, TWWS…LYGM, IGFN…IAPV, and FLQG…LGTI.

Belongs to the UPF0397 family.

The protein resides in the cell membrane. This chain is UPF0397 protein LJ_1703, found in Lactobacillus johnsonii (strain CNCM I-12250 / La1 / NCC 533).